A 357-amino-acid polypeptide reads, in one-letter code: Phosphate acyltransferase (357 aa).

The protein belongs to the PlsX family. As to quaternary structure, homodimer. Probably interacts with PlsY.

It is found in the cytoplasm. The catalysed reaction is a fatty acyl-[ACP] + phosphate = an acyl phosphate + holo-[ACP]. The protein operates within lipid metabolism; phospholipid metabolism. Its function is as follows. Catalyzes the reversible formation of acyl-phosphate (acyl-PO(4)) from acyl-[acyl-carrier-protein] (acyl-ACP). This enzyme utilizes acyl-ACP as fatty acyl donor, but not acyl-CoA. The protein is Phosphate acyltransferase of Herminiimonas arsenicoxydans.